Consider the following 250-residue polypeptide: Short-chain dehydrogenase RED3 (250 aa).

Positions 16, 35, 63, and 91 each coordinate NADP(+). Catalysis depends on proton donor residues serine 145 and tyrosine 164. Residues tyrosine 164, lysine 168, valine 195, and serine 197 each coordinate NADP(+). The Lowers pKa of active site Tyr role is filled by lysine 168.

The protein belongs to the short-chain dehydrogenases/reductases (SDR) family.

It participates in polyketide biosynthesis. Functionally, short-chain dehydrogenase; part of the gene cluster that mediates the biosynthesis of pyriculol and pyriculariol, two heptaketides that induce lesion formation upon application on rice leaves but are dispensable for pathogenicity. The highly reducing polyketide synthase synthesizes the heptaketide backbone of pyriculol and pyriculariol. Pyriculol and pyriculariol contain several hydroxyl moieties and double bonds, so it can be assumed that several reduction steps occur during biosynthesis. These reactions could be executed by PKS19 itself or partly by the tailoring enzymes OXR1, OXR2, RED1, RED2 or RED3, identified within the cluster. The FAD-linked oxidoreductase OXR1 is the only tailoring enzyme for which the function has been determined yet, and is involved in the oxidation of dihydropyriculol and dihydropyriculariol into pyriculol and pyriculariol, respectively. In Pyricularia oryzae (strain 70-15 / ATCC MYA-4617 / FGSC 8958) (Rice blast fungus), this protein is Short-chain dehydrogenase RED3.